The following is a 33-amino-acid chain: Dermonecrotic toxin LiSicTox-alphaI-1 (33 aa).

Glutamate 32 serves as a coordination point for Mg(2+).

It belongs to the arthropod phospholipase D family. Class II subfamily. It depends on Mg(2+) as a cofactor. In terms of processing, contains 2 disulfide bonds. As to expression, expressed by the venom gland.

The protein localises to the secreted. The catalysed reaction is an N-(acyl)-sphingosylphosphocholine = an N-(acyl)-sphingosyl-1,3-cyclic phosphate + choline. It catalyses the reaction an N-(acyl)-sphingosylphosphoethanolamine = an N-(acyl)-sphingosyl-1,3-cyclic phosphate + ethanolamine. It carries out the reaction a 1-acyl-sn-glycero-3-phosphocholine = a 1-acyl-sn-glycero-2,3-cyclic phosphate + choline. The enzyme catalyses a 1-acyl-sn-glycero-3-phosphoethanolamine = a 1-acyl-sn-glycero-2,3-cyclic phosphate + ethanolamine. Dermonecrotic toxins cleave the phosphodiester linkage between the phosphate and headgroup of certain phospholipids (sphingolipid and lysolipid substrates), forming an alcohol (often choline) and a cyclic phosphate. This toxin acts on sphingomyelin (SM). It may also act on ceramide phosphoethanolamine (CPE), lysophosphatidylcholine (LPC) and lysophosphatidylethanolamine (LPE), but not on lysophosphatidylserine (LPS), and lysophosphatidylglycerol (LPG). It acts by transphosphatidylation, releasing exclusively cyclic phosphate products as second products. In vivo, intradermal injection induces dermonecrosis. Induces hemolysis, increased vascular permeability, edema, inflammatory response, and platelet aggregation. This is Dermonecrotic toxin LiSicTox-alphaI-1 from Loxosceles intermedia (Brown spider).